The chain runs to 215 residues: N-(5'-phosphoribosyl)anthranilate isomerase (215 aa).

The protein belongs to the TrpF family.

It catalyses the reaction N-(5-phospho-beta-D-ribosyl)anthranilate = 1-(2-carboxyphenylamino)-1-deoxy-D-ribulose 5-phosphate. The protein operates within amino-acid biosynthesis; L-tryptophan biosynthesis; L-tryptophan from chorismate: step 3/5. This Paramagnetospirillum magneticum (strain ATCC 700264 / AMB-1) (Magnetospirillum magneticum) protein is N-(5'-phosphoribosyl)anthranilate isomerase.